We begin with the raw amino-acid sequence, 155 residues long: Interleukin-2 (155 aa).

The N-terminal stretch at 1–20 (MYKIQLLSCIALTLALVANG) is a signal peptide. O-linked (GalNAc...) threonine glycosylation occurs at threonine 23. A disulfide bond links cysteine 79 and cysteine 127.

The protein belongs to the IL-2 family.

Its subcellular location is the secreted. In terms of biological role, cytokine produced by activated CD4-positive helper T-cells and to a lesser extend activated CD8-positive T-cells and natural killer (NK) cells that plays pivotal roles in the immune response and tolerance. Binds to a receptor complex composed of either the high-affinity trimeric IL-2R (IL2RA/CD25, IL2RB/CD122 and IL2RG/CD132) or the low-affinity dimeric IL-2R (IL2RB and IL2RG). Interaction with the receptor leads to oligomerization and conformation changes in the IL-2R subunits resulting in downstream signaling starting with phosphorylation of JAK1 and JAK3. In turn, JAK1 and JAK3 phosphorylate the receptor to form a docking site leading to the phosphorylation of several substrates including STAT5. This process leads to activation of several pathways including STAT, phosphoinositide-3-kinase/PI3K and mitogen-activated protein kinase/MAPK pathways. Functions as a T-cell growth factor and can increase NK-cell cytolytic activity as well. Promotes strong proliferation of activated B-cells and subsequently immunoglobulin production. Plays a pivotal role in regulating the adaptive immune system by controlling the survival and proliferation of regulatory T-cells, which are required for the maintenance of immune tolerance. Moreover, participates in the differentiation and homeostasis of effector T-cell subsets, including Th1, Th2, Th17 as well as memory CD8-positive T-cells. This Ovis aries (Sheep) protein is Interleukin-2 (IL2).